We begin with the raw amino-acid sequence, 244 residues long: NAD(P)H-quinone oxidoreductase subunit K (244 aa).

Positions 60, 61, 125, and 156 each coordinate [4Fe-4S] cluster. The span at 221-236 (SKKEKITELPENREQT) shows a compositional bias: basic and acidic residues. The disordered stretch occupies residues 221–244 (SKKEKITELPENREQTEIINSEEE).

Belongs to the complex I 20 kDa subunit family. As to quaternary structure, NDH-1 can be composed of about 15 different subunits; different subcomplexes with different compositions have been identified which probably have different functions. The cofactor is [4Fe-4S] cluster.

The protein localises to the cellular thylakoid membrane. The enzyme catalyses a plastoquinone + NADH + (n+1) H(+)(in) = a plastoquinol + NAD(+) + n H(+)(out). It carries out the reaction a plastoquinone + NADPH + (n+1) H(+)(in) = a plastoquinol + NADP(+) + n H(+)(out). Functionally, NDH-1 shuttles electrons from an unknown electron donor, via FMN and iron-sulfur (Fe-S) centers, to quinones in the respiratory and/or the photosynthetic chain. The immediate electron acceptor for the enzyme in this species is believed to be plastoquinone. Couples the redox reaction to proton translocation, and thus conserves the redox energy in a proton gradient. Cyanobacterial NDH-1 also plays a role in inorganic carbon-concentration. The polypeptide is NAD(P)H-quinone oxidoreductase subunit K (Prochlorococcus marinus (strain MIT 9312)).